Consider the following 115-residue polypeptide: Ribonuclease P protein component (115 aa).

This sequence belongs to the RnpA family. In terms of assembly, consists of a catalytic RNA component (M1 or rnpB) and a protein subunit.

It carries out the reaction Endonucleolytic cleavage of RNA, removing 5'-extranucleotides from tRNA precursor.. Its function is as follows. RNaseP catalyzes the removal of the 5'-leader sequence from pre-tRNA to produce the mature 5'-terminus. It can also cleave other RNA substrates such as 4.5S RNA. The protein component plays an auxiliary but essential role in vivo by binding to the 5'-leader sequence and broadening the substrate specificity of the ribozyme. This chain is Ribonuclease P protein component, found in Bacillus mycoides (strain KBAB4) (Bacillus weihenstephanensis).